A 518-amino-acid polypeptide reads, in one-letter code: D-aminopeptidase (518 aa).

The Nucleophile role is filled by Ser62. The Proton donor/acceptor role is filled by Lys65. Positions 373-392 (FGTGPEKMDISGENEAQSSM) are disordered. Positions 477–487 (QRSMDAPSPGE) are important for specificity. Asp481 lines the substrate pocket.

Belongs to the peptidase S12 family. Homodimer.

It catalyses the reaction Release of an N-terminal D-amino acid from a peptide, Xaa-|-Yaa-, in which Xaa is preferably D-Ala, D-Ser or D-Thr. D-amino acid amides and methyl esters also are hydrolyzed, as is glycine amide.. With respect to regulation, inhibited by beta-lactam compounds such as 6-aminopenicillic acid, 7-aminocephalosporanic acid, benzylpenicillin and ampicillin. Inhibited by p-chloromercuribenzoate. Its function is as follows. Hydrolyzes N-terminal residues in D-amino acid-containing peptides. The chain is D-aminopeptidase from Brucella melitensis biotype 1 (strain ATCC 23456 / CCUG 17765 / NCTC 10094 / 16M).